Consider the following 224-residue polypeptide: Flagellar L-ring protein (224 aa).

The N-terminal stretch at 1–15 (MKWYLVALSGLLLSG) is a signal peptide. The N-palmitoyl cysteine moiety is linked to residue Cys-16. Cys-16 carries S-diacylglycerol cysteine lipidation.

It belongs to the FlgH family. The basal body constitutes a major portion of the flagellar organelle and consists of four rings (L,P,S, and M) mounted on a central rod.

The protein localises to the cell outer membrane. It is found in the bacterial flagellum basal body. Assembles around the rod to form the L-ring and probably protects the motor/basal body from shearing forces during rotation. The sequence is that of Flagellar L-ring protein from Trichlorobacter lovleyi (strain ATCC BAA-1151 / DSM 17278 / SZ) (Geobacter lovleyi).